The chain runs to 456 residues: Methylthioribose-1-phosphate isomerase (456 aa).

The segment at 40-113 (KGLVHGGFIF…CFKGEDKVFE (74 aa)) is thioesterase. An MTR-1-P isomerase region spans residues 124-456 (MFWRGEKMEV…PERITEALKD (333 aa)). Residues 176–178 (RGA), arginine 211, and glutamine 309 each bind substrate. The active-site Proton donor is the aspartate 350. Residue 360–361 (NK) coordinates substrate.

It belongs to the eIF-2B alpha/beta/delta subunits family. MtnA subfamily.

It carries out the reaction 5-(methylsulfanyl)-alpha-D-ribose 1-phosphate = 5-(methylsulfanyl)-D-ribulose 1-phosphate. It participates in amino-acid biosynthesis; L-methionine biosynthesis via salvage pathway; L-methionine from S-methyl-5-thio-alpha-D-ribose 1-phosphate: step 1/6. Catalyzes the interconversion of methylthioribose-1-phosphate (MTR-1-P) into methylthioribulose-1-phosphate (MTRu-1-P). The polypeptide is Methylthioribose-1-phosphate isomerase (mtnA) (Aquifex aeolicus (strain VF5)).